The sequence spans 429 residues: Glutamate-1-semialdehyde 2,1-aminomutase (429 aa).

Lysine 268 is subject to N6-(pyridoxal phosphate)lysine.

Belongs to the class-III pyridoxal-phosphate-dependent aminotransferase family. HemL subfamily. As to quaternary structure, homodimer. Pyridoxal 5'-phosphate is required as a cofactor.

It is found in the cytoplasm. The enzyme catalyses (S)-4-amino-5-oxopentanoate = 5-aminolevulinate. It functions in the pathway porphyrin-containing compound metabolism; protoporphyrin-IX biosynthesis; 5-aminolevulinate from L-glutamyl-tRNA(Glu): step 2/2. In Serratia proteamaculans (strain 568), this protein is Glutamate-1-semialdehyde 2,1-aminomutase.